Reading from the N-terminus, the 186-residue chain is Protein Syd (186 aa).

It belongs to the Syd family.

Its subcellular location is the cell inner membrane. In terms of biological role, interacts with the SecY protein in vivo. May bind preferentially to an uncomplexed state of SecY, thus functioning either as a chelating agent for excess SecY in the cell or as a regulatory factor that negatively controls the translocase function. This is Protein Syd from Erwinia tasmaniensis (strain DSM 17950 / CFBP 7177 / CIP 109463 / NCPPB 4357 / Et1/99).